We begin with the raw amino-acid sequence, 115 residues long: T cell receptor beta variable 16 (115 aa).

The first 20 residues, 1–20 (MSPIFTCITILCLLAAGSPG), serve as a signal peptide directing secretion. The 95-residue stretch at 21-115 (EEVAQTPKHL…SAVYFCASSQ (95 aa)) folds into the Ig-like domain. Cys42 and Cys111 are oxidised to a cystine.

Alpha-beta TR is a heterodimer composed of an alpha and beta chain; disulfide-linked. The alpha-beta TR is associated with the transmembrane signaling CD3 coreceptor proteins to form the TR-CD3 (TcR or TCR). The assembly of alpha-beta TR heterodimers with CD3 occurs in the endoplasmic reticulum where a single alpha-beta TR heterodimer associates with one CD3D-CD3E heterodimer, one CD3G-CD3E heterodimer and one CD247 homodimer forming a stable octameric structure. CD3D-CD3E and CD3G-CD3E heterodimers preferentially associate with TR alpha and TR beta chains, respectively. The association of the CD247 homodimer is the last step of TcR assembly in the endoplasmic reticulum and is required for transport to the cell surface.

Its subcellular location is the cell membrane. In terms of biological role, v region of the variable domain of T cell receptor (TR) beta chain that participates in the antigen recognition. Alpha-beta T cell receptors are antigen specific receptors which are essential to the immune response and are present on the cell surface of T lymphocytes. Recognize peptide-major histocompatibility (MH) (pMH) complexes that are displayed by antigen presenting cells (APC), a prerequisite for efficient T cell adaptive immunity against pathogens. Binding of alpha-beta TR to pMH complex initiates TR-CD3 clustering on the cell surface and intracellular activation of LCK that phosphorylates the ITAM motifs of CD3G, CD3D, CD3E and CD247 enabling the recruitment of ZAP70. In turn ZAP70 phosphorylates LAT, which recruits numerous signaling molecules to form the LAT signalosome. The LAT signalosome propagates signal branching to three major signaling pathways, the calcium, the mitogen-activated protein kinase (MAPK) kinase and the nuclear factor NF-kappa-B (NF-kB) pathways, leading to the mobilization of transcription factors that are critical for gene expression and essential for T cell growth and differentiation. The T cell repertoire is generated in the thymus, by V-(D)-J rearrangement. This repertoire is then shaped by intrathymic selection events to generate a peripheral T cell pool of self-MH restricted, non-autoaggressive T cells. Post-thymic interaction of alpha-beta TR with the pMH complexes shapes TR structural and functional avidity. The sequence is that of T cell receptor beta variable 16 from Homo sapiens (Human).